Reading from the N-terminus, the 356-residue chain is MGACLSAEQSHDTPEYKRSKALDRRIKEDEKNLSREVKLLLLGAGESGKSTILKSMRIIHHIPFTDEERENFRRLVFLNLVQGMKTILDVMEEWSIDFQDDSNIDHLLLFVSYPDISEDEPFPTNYLVALKDLWLDQGVQSVYRRGNEAAVPDNMSYYYTDLDRLFSPSYIPSEDDILRCRNKTTGIIETTFPLQDHVYRIFDVGGQRSERKKWIHCFENVTAVLFCVALSGYDSCLVEDKDSNQMQEALMLFDSICNSKWFARTSMILFLNKVDVFRQKIAYSSIKHYFPDYDGDDQDFNAARSYFKARFCRLNRSVNKEIYPSFTNATDVSLLKIVMASVTDIILTNNLRDIVL.

Glycine 2 is lipidated: N-myristoyl glycine. Cysteine 4 carries S-palmitoyl cysteine lipidation. The region spanning 35 to 356 (REVKLLLLGA…LTNNLRDIVL (322 aa)) is the G-alpha domain. The G1 motif stretch occupies residues 38–51 (KLLLLGAGESGKST). Residues glutamate 46, serine 47, glycine 48, lysine 49, serine 50, threonine 51, aspartate 153, leucine 178, threonine 184, glycine 206, asparagine 272, lysine 273, aspartate 275, and alanine 329 each contribute to the GTP site. Mg(2+) is bound at residue serine 50. A G2 motif region spans residues 176–184 (DILRCRNKT). Residue threonine 184 coordinates Mg(2+). Residues 199 to 208 (YRIFDVGGQR) are G3 motif. Positions 268-275 (ILFLNKVD) are G4 motif. Residues 327 to 332 (TNATDV) form a G5 motif region.

The protein belongs to the G-alpha family. In terms of assembly, g proteins are composed of 3 units; alpha, beta and gamma. The alpha chain contains the guanine nucleotide binding site. Mg(2+) serves as cofactor.

In terms of biological role, guanine nucleotide-binding proteins (G proteins) are involved as modulators or transducers in various transmembrane signaling systems. In Mycosarcoma maydis (Corn smut fungus), this protein is Guanine nucleotide-binding protein alpha-2 subunit (GPA2).